A 399-amino-acid chain; its full sequence is Imidazolonepropionase (399 aa).

A compositionally biased stretch (polar residues) spans 1-13 (MSETLYTGISQLA). The tract at residues 1–20 (MSETLYTGISQLATPRPGPQ) is disordered. Fe(3+) is bound by residues histidine 74 and histidine 76. Residues histidine 74 and histidine 76 each contribute to the Zn(2+) site. 3 residues coordinate 4-imidazolone-5-propanoate: arginine 83, tyrosine 146, and histidine 176. Tyrosine 146 serves as a coordination point for N-formimidoyl-L-glutamate. Histidine 238 contributes to the Fe(3+) binding site. Histidine 238 contributes to the Zn(2+) binding site. Glutamine 241 is a 4-imidazolone-5-propanoate binding site. Aspartate 312 serves as a coordination point for Fe(3+). Aspartate 312 provides a ligand contact to Zn(2+). N-formimidoyl-L-glutamate contacts are provided by asparagine 314 and glycine 316. Position 317 (serine 317) interacts with 4-imidazolone-5-propanoate.

Belongs to the metallo-dependent hydrolases superfamily. HutI family. It depends on Zn(2+) as a cofactor. The cofactor is Fe(3+).

It localises to the cytoplasm. The catalysed reaction is 4-imidazolone-5-propanoate + H2O = N-formimidoyl-L-glutamate. Its pathway is amino-acid degradation; L-histidine degradation into L-glutamate; N-formimidoyl-L-glutamate from L-histidine: step 3/3. In terms of biological role, catalyzes the hydrolytic cleavage of the carbon-nitrogen bond in imidazolone-5-propanoate to yield N-formimidoyl-L-glutamate. It is the third step in the universal histidine degradation pathway. The sequence is that of Imidazolonepropionase from Deinococcus radiodurans (strain ATCC 13939 / DSM 20539 / JCM 16871 / CCUG 27074 / LMG 4051 / NBRC 15346 / NCIMB 9279 / VKM B-1422 / R1).